We begin with the raw amino-acid sequence, 118 residues long: Large ribosomal subunit protein bL20 (118 aa).

It belongs to the bacterial ribosomal protein bL20 family.

Its function is as follows. Binds directly to 23S ribosomal RNA and is necessary for the in vitro assembly process of the 50S ribosomal subunit. It is not involved in the protein synthesizing functions of that subunit. This is Large ribosomal subunit protein bL20 from Acidiphilium cryptum (strain JF-5).